Consider the following 83-residue polypeptide: Alpha-neurotoxin NTX-3 (83 aa).

The first 21 residues, 1 to 21 (MKTLLLTLLVVTIVCLDLGYT), serve as a signal peptide directing secretion. Cystine bridges form between Cys24/Cys45, Cys38/Cys62, Cys64/Cys75, and Cys76/Cys81.

The protein belongs to the three-finger toxin family. Short-chain subfamily. Type I alpha-neurotoxin sub-subfamily. Expressed by the venom gland.

It is found in the secreted. Its function is as follows. Binds to muscle nicotinic acetylcholine receptor (nAChR) and inhibit acetylcholine from binding to the receptor, thereby impairing neuromuscular transmission. This is Alpha-neurotoxin NTX-3 from Naja sputatrix (Malayan spitting cobra).